Consider the following 293-residue polypeptide: Protoheme IX farnesyltransferase (293 aa).

A run of 9 helical transmembrane segments spans residues 9 to 29, 38 to 58, 86 to 106, 111 to 131, 137 to 157, 167 to 187, 211 to 231, 234 to 254, and 271 to 291; these read LIKP…FLLA, YIIL…SCVL, FVKN…LFLG, LLTI…YSLW, IYST…GYCT, WLLF…ITIF, IHMI…TVLG, SYTF…TGWY, and ILSI…SIFI.

It belongs to the UbiA prenyltransferase family. Protoheme IX farnesyltransferase subfamily.

It is found in the cell inner membrane. It catalyses the reaction heme b + (2E,6E)-farnesyl diphosphate + H2O = Fe(II)-heme o + diphosphate. It functions in the pathway porphyrin-containing compound metabolism; heme O biosynthesis; heme O from protoheme: step 1/1. Its function is as follows. Converts heme B (protoheme IX) to heme O by substitution of the vinyl group on carbon 2 of heme B porphyrin ring with a hydroxyethyl farnesyl side group. This is Protoheme IX farnesyltransferase from Blochmanniella floridana.